The sequence spans 394 residues: Phosphoglycerate kinase (394 aa).

Residues 21–23 (DFN), arginine 36, 59–62 (HLGR), arginine 118, and arginine 151 contribute to the substrate site. At serine 183 the chain carries Phosphoserine. ATP is bound by residues lysine 201 and glycine 292. Threonine 299 is modified (phosphothreonine). ATP-binding positions include glutamate 323 and 350-353 (GGDS).

It belongs to the phosphoglycerate kinase family. As to quaternary structure, monomer.

The protein resides in the cytoplasm. The enzyme catalyses (2R)-3-phosphoglycerate + ATP = (2R)-3-phospho-glyceroyl phosphate + ADP. It participates in carbohydrate degradation; glycolysis; pyruvate from D-glyceraldehyde 3-phosphate: step 2/5. This Bacillus cereus (strain G9842) protein is Phosphoglycerate kinase.